The following is a 105-amino-acid chain: MDKKELFDALDDFSQQLLVTLADVEAIKKNLKSLVEENTALRLENSKLRERLGEVEADAPVKAKHVRESVRRIYRDGFHVCNDFYGQRREQDEECMFCDELLYRE.

H79, C81, C95, and C98 together coordinate Zn(2+).

It belongs to the YabA family. Homotetramer. Interacts with both DnaA and DnaN, acting as a bridge between these two proteins. The cofactor is Zn(2+).

The protein resides in the cytoplasm. The protein localises to the nucleoid. Functionally, involved in control of chromosome replication initiation. Inhibits the cooperative binding of DnaA to the oriC region, thus negatively regulating initiation of chromosome replication. Inhibits the ability of DnaA-ATP to form a helix on DNA; does not disassemble preformed DnaA-DNA helices. Decreases the residence time of DnaA on the chromosome at its binding sites (oriC, replication forks and promoter-binding sites). Tethers DnaA to the replication machinery via the DNA polymerase beta sliding clamp subunit (dnaN). Associates with oriC and other DnaA targets on the chromosome in a DnaA-dependent manner. The chain is Replication initiation control protein YabA from Streptococcus pneumoniae serotype 2 (strain D39 / NCTC 7466).